We begin with the raw amino-acid sequence, 985 residues long: MFLCFCPCHVPIMSRLSPATGISSRLRFSIGLSSDGRLIPFGFRFRRNDVPFKRRLRFVIRAQLSEAFSPDLGLDSQAVKSRDTSNLPWIGPVPGDIAEVEAYCRIFRSAERLHGALMETLCNPVTGECRVPYDFSPEEKPLLEDKIVSVLGCILSLLNKGRKEILSGRSSSMNSFNLDDVGVAEESLPPLAVFRGEMKRCCESLHIALENYLTPDDERSGIVWRKLQKLKNVCYDAGFPRSDNYPCQTLFANWDPIYSSNTKEDIDSYESEIAFWRGGQVTQEGLKWLIENGFKTIVDLRAEIVKDTFYQTALDDAISLGKITVVQIPIDVRMAPKAEQVELFASIVSDSSKRPIYVHSKEGVWRTSAMVSRWKQYMTRPITKEIPVSEESKRREVSETKLGSNAVVSGKGVPDEQTDKVSEINEVDSRSASSQSKESGRFEGDTSASEFNMVSDPLKSQVPPGNIFSRKEMSKFLKSKSIAPAGYLTNPSKILGTVPTPQFSYTGVTNGNQIVDKDSIRRLAETGNSNGTLLPTSSQSLDFGNGKFSNGNVHASDNTNKSISDNRGNGFSAAPIAVPPSDNLSRAVGSHSVRESQTQRNNSGSSSDSSDDEAGAIEGNMCASATGVVRVQSRKKAEMFLVRTDGVSCTREKVTESSLAFTHPSTQQQMLLWKTTPKTVLLLKKLGQELMEEAKEAASFLYHQENMNVLVEPEVHDVFARIPGFGFVQTFYIQDTSDLHERVDFVACLGGDGVILHASNLFKGAVPPVVSFNLGSLGFLTSHPFEDFRQDLKRVIHGNNTLDGVYITLRMRLRCEIYRKGKAMPGKVFDVLNEIVVDRGSNPYLSKIECYEHDRLITKVQGDGVIVATPTGSTAYSTAAGGSMVHPNVPCMLFTPICPHSLSFRPVILPDSAKLELKIPDDARSNAWVSFDGKRRQQLSRGDSVRIYMSQHPLPTVNKSDQTGDWFRSLIRCLNWNERLDQKAL.

Residues 1–62 (MFLCFCPCHV…KRRLRFVIRA (62 aa)) constitute a chloroplast transit peptide. The segment at 335–380 (APKAEQVELFASIVSDSSKRPIYVHSKEGVWRTSAMVSRWKQYMTR) is calmodulin-binding. 2 disordered regions span residues 389–466 (SEES…PPGN) and 548–615 (FSNG…DEAG). Basic and acidic residues-rich tracts occupy residues 390-399 (EESKRREVSE) and 413-429 (VPDE…EVDS). Over residues 548–569 (FSNGNVHASDNTNKSISDNRGN) the composition is skewed to polar residues.

Belongs to the NAD kinase family. Expressed in leaves.

Its subcellular location is the plastid. It localises to the chloroplast. The enzyme catalyses NAD(+) + ATP = ADP + NADP(+) + H(+). Its function is as follows. Involved in chlorophyll synthesis and chloroplast protection against oxidative damage. The chain is NAD kinase 2, chloroplastic (NADK2) from Arabidopsis thaliana (Mouse-ear cress).